The chain runs to 536 residues: Glutamyl-tRNA(Gln) amidotransferase subunit B, mitochondrial (536 aa).

Residues 1 to 8 (MLRVHRLY) constitute a mitochondrion transit peptide.

Belongs to the GatB/GatE family. GatB subfamily. Subunit of the heterotrimeric GatFAB amidotransferase (AdT) complex, composed of A, B and F subunits.

Its subcellular location is the mitochondrion. It catalyses the reaction L-glutamyl-tRNA(Gln) + L-glutamine + ATP + H2O = L-glutaminyl-tRNA(Gln) + L-glutamate + ADP + phosphate + H(+). Its function is as follows. Allows the formation of correctly charged Gln-tRNA(Gln) through the transamidation of misacylated Glu-tRNA(Gln) in the mitochondria. The reaction takes place in the presence of glutamine and ATP through an activated gamma-phospho-Glu-tRNA(Gln). The chain is Glutamyl-tRNA(Gln) amidotransferase subunit B, mitochondrial from Eremothecium gossypii (strain ATCC 10895 / CBS 109.51 / FGSC 9923 / NRRL Y-1056) (Yeast).